The following is a 456-amino-acid chain: Asparagine--tRNA ligase (456 aa).

Belongs to the class-II aminoacyl-tRNA synthetase family. As to quaternary structure, homodimer.

The protein resides in the cytoplasm. It carries out the reaction tRNA(Asn) + L-asparagine + ATP = L-asparaginyl-tRNA(Asn) + AMP + diphosphate + H(+). This chain is Asparagine--tRNA ligase, found in Mycoplasma genitalium (strain ATCC 33530 / DSM 19775 / NCTC 10195 / G37) (Mycoplasmoides genitalium).